We begin with the raw amino-acid sequence, 521 residues long: Organic cation/carnitine transporter 6 (521 aa).

Residues 1 to 37 (MADPISEPLLSHLTDDSGVNEKTRLEALTFDKIVEQS) are Cytoplasmic-facing. A helical membrane pass occupies residues 38–58 (LSDFGFWQFFQISLVGLALLF). The Extracellular portion of the chain corresponds to 59-123 (DAQQIFITVY…GLECSSSLLR (65 aa)). Residue N79 is glycosylated (N-linked (GlcNAc...) asparagine). The helical transmembrane segment at 124 to 144 (GMPSSAFYIGAIVGGFFLALI) threads the bilayer. Over 145-154 (PDDSLGRKKL) the chain is Cytoplasmic. The chain crosses the membrane as a helical span at residues 155–177 (VLFSTFAMSITSISVIFSTNVWI). Over 178–182 (YTFLK) the chain is Extracellular. A helical membrane pass occupies residues 183–200 (FIIGFSRSQTWSYALVLI). ATP is bound at residue 200–207 (ISERVSTR). Residues 201-213 (SERVSTRWRPRAT) lie on the Cytoplasmic side of the membrane. Residues 214–234 (MIPFTLFVLGFMSLSGIAFLA) traverse the membrane as a helical segment. Topologically, residues 235-241 (QDSSWRY) are extracellular. Residues 242-262 (LYLYTSVPAVFYCIFLYLFAL) traverse the membrane as a helical segment. Over 263–326 (ESPRWLHMQG…FFFRKWAFRR (64 aa)) the chain is Cytoplasmic. The helical transmembrane segment at 327 to 347 (ILVVMIIMFGLGISYYGVPLA) threads the bilayer. At 348–356 (ARDIDVNIY) the chain is on the extracellular side. A helical membrane pass occupies residues 357 to 377 (LSETLNALVELPTFVITPILL). Residues 378-385 (ERFNRRSS) are Cytoplasmic-facing. Residues 386 to 406 (VLVNTLLGGASGVLCFVLSIL) form a helical membrane-spanning segment. Residues 407 to 412 (GKTEIA) are Extracellular-facing. A helical membrane pass occupies residues 413-433 (FAFELGTFFCARIGFNLMAVF). At 434-447 (MVEMFPTCVRSSAT) the chain is on the cytoplasmic side. Residues 448 to 468 (MMFRQALVVGGACCPLIASIG) form a helical membrane-spanning segment. Topologically, residues 469–473 (RYIPS) are extracellular. Residues 474-494 (VSFAIFGIAMSGLGMFVLILP) form a helical membrane-spanning segment. Over 495–521 (ETKGLSLCDSMEEQEKRDQAVNTSHVC) the chain is Cytoplasmic.

Belongs to the major facilitator (TC 2.A.1) superfamily. Organic cation transporter (TC 2.A.1.19) family. In terms of tissue distribution, expressed in roots and stems. In the stem of secondary inflorescences, localized to the phloem. Also present in flowers, specifically in the stamen, in the filaments and the connective, and restricted to major veins in leaves.

Its subcellular location is the vacuole membrane. In terms of biological role, high affinity carnitine transporter involved in the active cellular uptake of carnitine. Also transports organic cations. The sequence is that of Organic cation/carnitine transporter 6 (OCT6) from Arabidopsis thaliana (Mouse-ear cress).